A 149-amino-acid chain; its full sequence is Transcriptional repressor NrdR (149 aa).

Residues 3-34 fold into a zinc finger; that stretch reads CPFCSATDTKVIDSRLVAEGHQVRRRRECTEC. The ATP-cone domain occupies 49–139; sequence PRVIKRDGSR…VYRAFEDVSE (91 aa).

This sequence belongs to the NrdR family. The cofactor is Zn(2+).

In terms of biological role, negatively regulates transcription of bacterial ribonucleotide reductase nrd genes and operons by binding to NrdR-boxes. This chain is Transcriptional repressor NrdR, found in Shewanella baltica (strain OS223).